The primary structure comprises 602 residues: Probable translation initiation factor IF-2 (602 aa).

One can recognise a tr-type G domain in the interval 9 to 229 (LRQPIVVVLG…GLTQNYMKNK (221 aa)). Residues 18-25 (GHVDHGKT) are G1. 18-25 (GHVDHGKT) is a GTP binding site. Residues 43–47 (EMTQE) form a G2 region. The G3 stretch occupies residues 82 to 85 (DTPG). GTP is bound by residues 82-86 (DTPGH) and 136-139 (NKID). The segment at 136–139 (NKID) is G4. Positions 204 to 206 (SAK) are G5.

Belongs to the TRAFAC class translation factor GTPase superfamily. Classic translation factor GTPase family. IF-2 subfamily.

Function in general translation initiation by promoting the binding of the formylmethionine-tRNA to ribosomes. Seems to function along with eIF-2. The chain is Probable translation initiation factor IF-2 (infB) from Sulfolobus acidocaldarius (strain ATCC 33909 / DSM 639 / JCM 8929 / NBRC 15157 / NCIMB 11770).